Consider the following 401-residue polypeptide: Acetate kinase (401 aa).

Asn10 provides a ligand contact to Mg(2+). Lys17 is an ATP binding site. Arg91 contacts substrate. The Proton donor/acceptor role is filled by Asp150. ATP-binding positions include 210-214 (HLGNG), 285-287 (DCR), and 333-337 (GIGEN). Glu387 contacts Mg(2+).

The protein belongs to the acetokinase family. Homodimer. Requires Mg(2+) as cofactor. It depends on Mn(2+) as a cofactor.

The protein localises to the cytoplasm. It carries out the reaction acetate + ATP = acetyl phosphate + ADP. Its pathway is metabolic intermediate biosynthesis; acetyl-CoA biosynthesis; acetyl-CoA from acetate: step 1/2. Its function is as follows. Catalyzes the formation of acetyl phosphate from acetate and ATP. Can also catalyze the reverse reaction. The sequence is that of Acetate kinase from Pasteurella multocida (strain Pm70).